The primary structure comprises 164 residues: uncharacterized protein (164 aa).

The N-terminal 60 residues, Met1–Gly60, are a transit peptide targeting the chloroplast.

The protein resides in the plastid. It is found in the chloroplast. This is an uncharacterized protein from Arabidopsis thaliana (Mouse-ear cress).